Here is a 669-residue protein sequence, read N- to C-terminus: Bestrophin-3 (669 aa).

Residues 1–31 (MTVTYSSKVANATFFGFHRLLLKWRGSIYKL) lie on the Cytoplasmic side of the membrane. A10 is a binding site for Ca(2+). A helical transmembrane segment spans residues 32 to 51 (LYREFIVFAVLYTAISLVYR). Residues 52–60 (LLLTGAQKR) lie on the Extracellular side of the membrane. A helical membrane pass occupies residues 61 to 82 (YFEKLSIYCDRYAEQIPVTFVL). Topologically, residues 83–237 (GFYVTLVVNR…DWVGIPLVYT (155 aa)) are cytoplasmic. A helical transmembrane segment spans residues 238–255 (QVVTLAVYTFFFACLIGR). Residues 256–274 (QFLDPTKGYVGHDLDLYVP) are Extracellular-facing. A helical membrane pass occupies residues 275-288 (IFTLLQFFFYAGWL). At 289 to 669 (KVAEQLINPF…GTPQRPRTWF (381 aa)) the chain is on the cytoplasmic side. Q293, N296, D301, and D304 together coordinate Ca(2+). 4 disordered regions span residues 399–496 (LSTH…TKMP), 533–560 (QPSG…SAST), 591–627 (TSLG…GAGS), and 646–669 (ILEF…RTWF). Positions 440–451 (NPHRGSPTRKQS) are enriched in basic residues. The span at 475 to 492 (RTSTLQSLSPQSSVRSSP) shows a compositional bias: low complexity. The segment covering 533 to 543 (QPSGTEQQVEP) has biased composition (polar residues). A compositionally biased stretch (basic and acidic residues) spans 646 to 656 (ILEFNNEHTGE).

Belongs to the anion channel-forming bestrophin (TC 1.A.46) family. Calcium-sensitive chloride channel subfamily. In terms of tissue distribution, expressed in heart. As to expression, expressed in brain, retina/retinal pigment epithelium (RPE) and skeletal muscle. Expressed in acinar cells of parotid glands. Expressed in lung, kidney and testis.

Its subcellular location is the cell membrane. It carries out the reaction chloride(in) = chloride(out). Ligand-gated anion channel that allows the movement of chloride monoatomic anions across cell membranes when activated by calcium (Ca2+). Its function is as follows. Does not function as calcium-gated chloride channel. The sequence is that of Bestrophin-3 (Best3) from Mus musculus (Mouse).